The primary structure comprises 912 residues: Protein translocase subunit SecA (912 aa).

ATP contacts are provided by residues glutamine 87, 105–109 (GEGKT), and aspartate 512. Zn(2+) is bound by residues cysteine 896, cysteine 898, cysteine 907, and histidine 908.

Belongs to the SecA family. Monomer and homodimer. Part of the essential Sec protein translocation apparatus which comprises SecA, SecYEG and auxiliary proteins SecDF-YajC and YidC. Requires Zn(2+) as cofactor.

The protein resides in the cell inner membrane. It localises to the cytoplasm. The enzyme catalyses ATP + H2O + cellular proteinSide 1 = ADP + phosphate + cellular proteinSide 2.. Functionally, part of the Sec protein translocase complex. Interacts with the SecYEG preprotein conducting channel. Has a central role in coupling the hydrolysis of ATP to the transfer of proteins into and across the cell membrane, serving both as a receptor for the preprotein-SecB complex and as an ATP-driven molecular motor driving the stepwise translocation of polypeptide chains across the membrane. In Pseudomonas fluorescens (strain Pf0-1), this protein is Protein translocase subunit SecA.